Reading from the N-terminus, the 263-residue chain is Hydroxyethylthiazole kinase 1 (263 aa).

Methionine 42 is a substrate binding site. Lysine 118 and threonine 164 together coordinate ATP. A substrate-binding site is contributed by glycine 191.

The protein belongs to the Thz kinase family. Requires Mg(2+) as cofactor.

The enzyme catalyses 5-(2-hydroxyethyl)-4-methylthiazole + ATP = 4-methyl-5-(2-phosphooxyethyl)-thiazole + ADP + H(+). Its pathway is cofactor biosynthesis; thiamine diphosphate biosynthesis; 4-methyl-5-(2-phosphoethyl)-thiazole from 5-(2-hydroxyethyl)-4-methylthiazole: step 1/1. In terms of biological role, catalyzes the phosphorylation of the hydroxyl group of 4-methyl-5-beta-hydroxyethylthiazole (THZ). In Clostridium botulinum (strain 657 / Type Ba4), this protein is Hydroxyethylthiazole kinase 1.